The primary structure comprises 272 residues: 1,4-dihydroxy-2-naphthoyl-CoA synthase (272 aa).

Substrate is bound by residues arginine 33, 72–76, tyrosine 84, 116–120, threonine 142, serine 148, tyrosine 245, and lysine 260; these read SGGDQ and YAIGG. 141–143 contacts hydrogencarbonate; sequence QTG. Positions 253–264 are enriched in basic and acidic residues; the sequence is GRDAFKEKRDPD. Positions 253-272 are disordered; the sequence is GRDAFKEKRDPDFDQFPKFP.

It belongs to the enoyl-CoA hydratase/isomerase family. MenB subfamily. It depends on hydrogencarbonate as a cofactor.

It catalyses the reaction 2-succinylbenzoyl-CoA + H(+) = 1,4-dihydroxy-2-naphthoyl-CoA + H2O. Its pathway is quinol/quinone metabolism; 1,4-dihydroxy-2-naphthoate biosynthesis; 1,4-dihydroxy-2-naphthoate from chorismate: step 6/7. It participates in quinol/quinone metabolism; menaquinone biosynthesis. Functionally, converts o-succinylbenzoyl-CoA (OSB-CoA) to 1,4-dihydroxy-2-naphthoyl-CoA (DHNA-CoA). This is 1,4-dihydroxy-2-naphthoyl-CoA synthase from Staphylococcus saprophyticus subsp. saprophyticus (strain ATCC 15305 / DSM 20229 / NCIMB 8711 / NCTC 7292 / S-41).